Here is a 321-residue protein sequence, read N- to C-terminus: Protein ABIL3 (321 aa).

Disordered stretches follow at residues 179–273 (TIRE…RSAS) and 279–298 (EKEA…SKRL). Composition is skewed to low complexity over residues 204–215 (SATFSFSSIATA) and 240–255 (IRPS…SKSR). Positions 279 to 288 (EKEAQKEPEH) are enriched in basic and acidic residues.

The protein belongs to the ABI family. As to quaternary structure, binds SCAR.

The protein localises to the cytoplasm. It localises to the cytoskeleton. Its function is as follows. Involved in regulation of actin and microtubule organization. Part of a WAVE complex that activates the Arp2/3 complex. The sequence is that of Protein ABIL3 (ABIL3) from Arabidopsis thaliana (Mouse-ear cress).